A 371-amino-acid chain; its full sequence is Diguanylate cyclase A (371 aa).

A GGDEF domain is found at 233 to 366 (ETLSILMIDI…GRNRVTLSKN (134 aa)). Mg(2+)-binding residues include D241, I242, and E284. E284 functions as the Proton acceptor in the catalytic mechanism.

Exists as a homodimer and as larger aggregates. Both dimers and aggregates possess DGC activity. The cofactor is Mg(2+). Mn(2+) is required as a cofactor.

The protein localises to the cytoplasm. The catalysed reaction is 2 GTP = 3',3'-c-di-GMP + 2 diphosphate. Allosterically regulated by a feedback inhibition loop. Its function is as follows. Catalyzes the conversion of GTP to cyclic-di-GMP (c-di-GMP). Shows activity under aerobic and anaerobic reaction conditions. The protein is Diguanylate cyclase A of Treponema denticola (strain ATCC 35405 / DSM 14222 / CIP 103919 / JCM 8153 / KCTC 15104).